Reading from the N-terminus, the 352-residue chain is Large ribosomal subunit protein uL10 (352 aa).

Positions 286–297 (DDEDALPEELQD) are enriched in acidic residues. The disordered stretch occupies residues 286-352 (DDEDALPEEL…GAEGLGEMFG (67 aa)). Low complexity predominate over residues 299 to 310 (DAPAAPAGGEAD). Over residues 324–340 (EADDADDSDDDDDDDDG) the composition is skewed to acidic residues. The segment covering 343-352 (GAEGLGEMFG) has biased composition (gly residues).

The protein belongs to the universal ribosomal protein uL10 family. As to quaternary structure, part of the 50S ribosomal subunit. Forms part of the ribosomal stalk which helps the ribosome interact with GTP-bound translation factors. Forms a heptameric L10(L12)2(L12)2(L12)2 complex, where L10 forms an elongated spine to which the L12 dimers bind in a sequential fashion.

In terms of biological role, forms part of the ribosomal stalk, playing a central role in the interaction of the ribosome with GTP-bound translation factors. The protein is Large ribosomal subunit protein uL10 of Halobacterium salinarum (strain ATCC 700922 / JCM 11081 / NRC-1) (Halobacterium halobium).